Consider the following 512-residue polypeptide: Transmembrane protein 102 (512 aa).

The Extracellular portion of the chain corresponds to 1-267 (MASAVWGNAP…EAWPTLCPAQ (267 aa)). The interval 168–258 (PVPGGRDWIH…PGPQPSEARE (91 aa)) is disordered. Composition is skewed to basic and acidic residues over residues 174–186 (DWIHPTDSREGPR) and 195–209 (PHSDIIEPEAHESLE). Polar residues predominate over residues 210–226 (KSPSNVSVPESPQQNLT). A helical membrane pass occupies residues 268 to 284 (VAAWFFASLAAVAESLF). Over 285–512 (PVPGAPRLVH…GLAGVGAGSH (228 aa)) the chain is Cytoplasmic.

In terms of assembly, interacts with CSF2RB; this interaction occurs preferentially in the absence of CSF2.

Its subcellular location is the cell membrane. Selectively involved in CSF2 deprivation-induced apoptosis via a mitochondria-dependent pathway. In Bos taurus (Bovine), this protein is Transmembrane protein 102 (TMEM102).